A 374-amino-acid polypeptide reads, in one-letter code: MSDNSQKKVIVGMSGGVDSSVSAYLLQQQGYQVEGLFMKNWEEDDNEEYCTAAEDLADAQAVCDKLGIHLHTINFAAEYWDNVFEYFLEEYKAGRTPNPDILCNKEIKFKAFLEFADEVLDADFIAMGHYVRRTFPTAEEIANGIKPQMLRGLDSNKDQSYFLYTLSSEQVARSLFPVGELEKPEVRRIAEEQGLITAKKKDSTGICFIGERKFTEFLGKYLPAQPGNIETPEGKVIGQHQGLMYHTLGQRKGLHIGGTKGGGGNEDPWFVGEKDLKRNVLIAVQGKDHPLLKSQGLLASQLHWVDRTPIKAPLSCTVKTRYRQTDIPCTIIPVDDENIKVIFDEPQIAVTPGQSAVFYLDEVCLGGGIIEERI.

ATP contacts are provided by residues 12-19 and Met-38; that span reads GMSGGVDS. An interaction with target base in tRNA region spans residues 98 to 100; it reads NPD. Cys-103 functions as the Nucleophile in the catalytic mechanism. Cys-103 and Cys-207 are oxidised to a cystine. Gly-128 contacts ATP. The tract at residues 157-159 is interaction with tRNA; that stretch reads KDQ. Cys-207 (cysteine persulfide intermediate) is an active-site residue. Positions 321–322 are interaction with tRNA; that stretch reads RY.

This sequence belongs to the MnmA/TRMU family.

The protein localises to the cytoplasm. The catalysed reaction is S-sulfanyl-L-cysteinyl-[protein] + uridine(34) in tRNA + AH2 + ATP = 2-thiouridine(34) in tRNA + L-cysteinyl-[protein] + A + AMP + diphosphate + H(+). Its function is as follows. Catalyzes the 2-thiolation of uridine at the wobble position (U34) of tRNA, leading to the formation of s(2)U34. In Aliivibrio fischeri (strain ATCC 700601 / ES114) (Vibrio fischeri), this protein is tRNA-specific 2-thiouridylase MnmA.